Reading from the N-terminus, the 648-residue chain is tRNA 5-methylaminomethyl-2-thiouridine biosynthesis bifunctional protein MnmC (648 aa).

Positions 1 to 228 (MTDRLVPASL…VDDLLVGEYA (228 aa)) are tRNA (mnm(5)s(2)U34)-methyltransferase. An FAD-dependent cmnm(5)s(2)U34 oxidoreductase region spans residues 252–648 (IGAGLAGCAV…LRARRVGRAG (397 aa)).

It in the N-terminal section; belongs to the methyltransferase superfamily. tRNA (mnm(5)s(2)U34)-methyltransferase family. In the C-terminal section; belongs to the DAO family. FAD is required as a cofactor.

Its subcellular location is the cytoplasm. The enzyme catalyses 5-aminomethyl-2-thiouridine(34) in tRNA + S-adenosyl-L-methionine = 5-methylaminomethyl-2-thiouridine(34) in tRNA + S-adenosyl-L-homocysteine + H(+). Catalyzes the last two steps in the biosynthesis of 5-methylaminomethyl-2-thiouridine (mnm(5)s(2)U) at the wobble position (U34) in tRNA. Catalyzes the FAD-dependent demodification of cmnm(5)s(2)U34 to nm(5)s(2)U34, followed by the transfer of a methyl group from S-adenosyl-L-methionine to nm(5)s(2)U34, to form mnm(5)s(2)U34. The chain is tRNA 5-methylaminomethyl-2-thiouridine biosynthesis bifunctional protein MnmC from Burkholderia lata (strain ATCC 17760 / DSM 23089 / LMG 22485 / NCIMB 9086 / R18194 / 383).